Consider the following 504-residue polypeptide: MSIKAEEISSIIKQQIENYQSELKVSDVGTVTYIGDGIARAHGLDNAMAGELLEFSNGVMGMAQNLETNDVGIIILGPYTEIREGDEVRRTGKIMEVPVGEALIGRVVNSLGQPVDGLGPIETTGTRPIEAVAPGVMQRQSVNEPLQTGIKAIDALVPIGRGQRELIIGDRQTGKTSVAIDTILNQADQDMICIYVAIGQKESTVRNAVETLRHHGALDYTIVVTAAASQPAPLLYLAPYAGVAMAEEFMYNGKHVLVVYDDLSKQAAAYRELSLLLRRPPGREAYPGDVFYLHSRLLERAAKLNDSLGGGSITALPFVETQAGDISAYIPTNVISITDGQIFLQSDLFFSGVRPAINAGLSVSRVGGSAQIKAMKTVAGTLRLDLAAYRELESFSQFGSDLDAATRAKLERGKRTVEVLKQDLHKPLKVEKQVLILYALVHKYLDDVPVHDVLRFESEMNTWFDHNHPELLEEIRTTKKLPDEAKLEAALKEFKNTFVPSEEK.

G169–T176 contributes to the ATP binding site.

This sequence belongs to the ATPase alpha/beta chains family. As to quaternary structure, F-type ATPases have 2 components, CF(1) - the catalytic core - and CF(0) - the membrane proton channel. CF(1) has five subunits: alpha(3), beta(3), gamma(1), delta(1), epsilon(1). CF(0) has three main subunits: a(1), b(2) and c(9-12). The alpha and beta chains form an alternating ring which encloses part of the gamma chain. CF(1) is attached to CF(0) by a central stalk formed by the gamma and epsilon chains, while a peripheral stalk is formed by the delta and b chains.

It localises to the cell membrane. The enzyme catalyses ATP + H2O + 4 H(+)(in) = ADP + phosphate + 5 H(+)(out). Functionally, produces ATP from ADP in the presence of a proton gradient across the membrane. The alpha chain is a regulatory subunit. The sequence is that of ATP synthase subunit alpha 2 from Listeria monocytogenes serotype 4b (strain F2365).